The following is a 595-amino-acid chain: MSKVAKYRRQVSEDPDIDSLLSTLSPEEMEELEKELDVVDPDGSIPVGLRQRNQTDKQPSGSFNREAMLNFCEKESKKLIQREMSVDESKQVGRKTDAKNGEEKDSDASRKAPGPRQDSDLGKEPKKGVLKKSFSRDREEADGRGGEKPKEEKVIRGIDKGRVRAAVDRKESGKDGREERAAAARKEEEKTGSVKNAGLSRDKDKKKEEVKEPSKKEEVKLTAESRNTVGRREDGRLKESSKENKKPEDEGIGSGGRDWRKEDEKVKKEENQPDKEVREESKTKAPEKQAPSCPNKPSDGQARAEEEAAPSIFDEPLEKVKNNDPEMTEVNVNNSDCITNEILVRFTEALEFNTVVKVFALANTRADDHVAFAIAIMLKANKTITSLNLDSNHITGKGILAIFRALLQNNTLTELRFHNQRHICGVKTEMEIAKLLKENTTLLKLGYHFELAGPRMTVTNLLSRNMDKQRQKRLQEQKQAQEASGEKKDRLEVPKVGALAKGSPKPSPQPSPKPAPKNSPKKAGVPAAPPPPPPPLAPPLIMENLKNSLSPATQRKMGDKVLPAQEKNSRDQLLAAIRSSNLKQLKKVEVPKLLQ.

Disordered regions lie at residues 1-69, 81-322, and 467-568; these read MSKV…EAML, QREM…KVKN, and DKQR…QEKN. S12 carries the phosphoserine modification. The span at 27–40 shows a compositional bias: acidic residues; the sequence is EEMEELEKELDVVD. Basic and acidic residues-rich tracts occupy residues 81–110, 117–127, 134–192, 200–223, 230–249, 257–287, 467–476, and 484–493; these read QREM…DASR, QDSDLGKEPKK, FSRD…EKTG, SRDK…KLTA, GRRE…KPED, RDWR…KAPE, DKQRQKRLQE, and SGEKKDRLEV. S85 is subject to Phosphoserine. At S135 the chain carries Phosphoserine. 8 consecutive repeat copies span residues 165 to 179, 180 to 195, 196 to 211, 212 to 226, 227 to 240, 242 to 255, 256 to 271, and 272 to 288. An 8 X approximate tandem repeats region spans residues 165–288; sequence AAVDRKESGK…EESKTKAPEK (124 aa). A 5 X 4 AA approximate tandem repeats region spans residues 503–522; it reads SPKPSPQPSPKPAPKNSPKK. Pro residues-rich tracts occupy residues 505-517 and 527-538; these read KPSP…PAPK and AAPPPPPPPLAP. S550 is subject to Phosphoserine. Positions 569 to 588 constitute a WH2 domain; it reads SRDQLLAAIRSSNLKQLKKV.

This sequence belongs to the tropomodulin family. Detected in aorta, urinary bladder and uterus (at protein level). Detected in smooth muscle cells. Detected in aorta, bladder, colon, intestine, stomach and uterus.

It localises to the cytoplasm. The protein localises to the myofibril. Its subcellular location is the sarcomere. It is found in the cytoskeleton. In terms of biological role, required for proper contractility of visceral smooth muscle cells. Mediates nucleation of actin filaments. The chain is Leiomodin-1 (Lmod1) from Mus musculus (Mouse).